Reading from the N-terminus, the 118-residue chain is Large ribosomal subunit protein bL20 (118 aa).

It belongs to the bacterial ribosomal protein bL20 family.

Functionally, binds directly to 23S ribosomal RNA and is necessary for the in vitro assembly process of the 50S ribosomal subunit. It is not involved in the protein synthesizing functions of that subunit. The polypeptide is Large ribosomal subunit protein bL20 (Francisella tularensis subsp. tularensis (strain WY96-3418)).